Consider the following 299-residue polypeptide: Phosphoribosylaminoimidazole-succinocarboxamide synthase (299 aa).

It belongs to the SAICAR synthetase family.

It catalyses the reaction 5-amino-1-(5-phospho-D-ribosyl)imidazole-4-carboxylate + L-aspartate + ATP = (2S)-2-[5-amino-1-(5-phospho-beta-D-ribosyl)imidazole-4-carboxamido]succinate + ADP + phosphate + 2 H(+). Its pathway is purine metabolism; IMP biosynthesis via de novo pathway; 5-amino-1-(5-phospho-D-ribosyl)imidazole-4-carboxamide from 5-amino-1-(5-phospho-D-ribosyl)imidazole-4-carboxylate: step 1/2. The chain is Phosphoribosylaminoimidazole-succinocarboxamide synthase from Desulfatibacillum aliphaticivorans.